Consider the following 244-residue polypeptide: U11/U12 small nuclear ribonucleoprotein 35 kDa protein (244 aa).

In terms of domain architecture, RRM spans Leu-51–Glu-129. A compositionally biased stretch (basic and acidic residues) spans Gly-146 to Phe-162. Residues Gly-146–Lys-244 form a disordered region. Residue Lys-172 forms a Glycyl lysine isopeptide (Lys-Gly) (interchain with G-Cter in SUMO2) linkage. 2 stretches are compositionally biased toward basic and acidic residues: residues Asn-173–Glu-185 and Arg-192–Lys-244.

In terms of assembly, component of the U11/U12 snRNPs that are part of the U12-type spliceosome.

The protein localises to the nucleus. This chain is U11/U12 small nuclear ribonucleoprotein 35 kDa protein (Snrnp35), found in Rattus norvegicus (Rat).